Consider the following 85-residue polypeptide: Cell division topological specificity factor (85 aa).

This sequence belongs to the MinE family.

Its function is as follows. Prevents the cell division inhibition by proteins MinC and MinD at internal division sites while permitting inhibition at polar sites. This ensures cell division at the proper site by restricting the formation of a division septum at the midpoint of the long axis of the cell. The sequence is that of Cell division topological specificity factor from Thioalkalivibrio sulfidiphilus (strain HL-EbGR7).